We begin with the raw amino-acid sequence, 311 residues long: Phospholipid phosphatase 3 (311 aa).

Over 1 to 33 the chain is Cytoplasmic; sequence MQNYKYDKAIVPESKNGGSPALNNNPRRSGSKR. Ser-19 carries the post-translational modification Phosphoserine. Residues 34 to 54 form a helical membrane-spanning segment; it reads VLLICLDLFCLFMAGLPFLII. Residues 55 to 85 are Extracellular-facing; it reads ETSTIKPYHRGFYCNDESIKYPLKTGETIND. A helical membrane pass occupies residues 86-106; that stretch reads AVLCAVGIVIAILAIITGEFY. The Cytoplasmic portion of the chain corresponds to 107–122; that stretch reads RIYYLKKSRSTIQNPY. The Dityrosine basolateral targeting motif signature appears at 109 to 110; that stretch reads YY. A helical transmembrane segment spans residues 123-143; sequence VAALYKQVGCFLFGCAISQSF. At 144-193 the chain is on the extracellular side; that stretch reads TDIAKVSIGRLRPHFLSVCNPDFSQINCSEGYIQNYRCRGDDSKVQEARK. Residues 148 to 156 are phosphatase sequence motif I; that stretch reads KVSIGRLRP. Asn-170 carries an N-linked (GlcNAc...) asparagine glycan. An Integrin-binding motif motif is present at residues 182–184; that stretch reads RGD. A helical transmembrane segment spans residues 194-214; that stretch reads SFFSGHASFSMYTMLYLVLYL. The phosphatase sequence motif II stretch occupies residues 196-199; it reads FSGH. His-199 acts as the Proton donors in catalysis. Residues 215-225 lie on the Cytoplasmic side of the membrane; that stretch reads QARFTWRGARL. The helical transmembrane segment at 226 to 243 threads the bilayer; the sequence is LRPLLQFTLIMMAFYTGL. A phosphatase sequence motif III region spans residues 244-255; that stretch reads SRVSDHKHHPSD. The Extracellular portion of the chain corresponds to 244 to 257; it reads SRVSDHKHHPSDVL. The active-site Nucleophile is His-251. A helical membrane pass occupies residues 258–278; that stretch reads AGFAQGALVACCIVFFVSDLF. The interval 275 to 311 is mediates interaction with CTNND1; it reads SDLFKTKTTLSLPAPAIRKEILSPVDIIDRNNHHNMM. At 279 to 311 the chain is on the cytoplasmic side; sequence KTKTTLSLPAPAIRKEILSPVDIIDRNNHHNMM.

The protein belongs to the PA-phosphatase related phosphoesterase family. As to quaternary structure, forms functional homodimers and homooligomers that are not required for substrate recognition and catalytic activity. Can also form heterooligomers with other PLPP2 and PLPP3. Interacts with CTNND1; negatively regulates the PLPP3-mediated stabilization of beta-catenin/CTNNB1. In terms of processing, N-glycosylated. Contains high-mannose oligosaccharides. As to expression, ubiquitously expressed. Highly expressed in heart and placenta.

The protein resides in the cell membrane. The protein localises to the basolateral cell membrane. It localises to the endoplasmic reticulum membrane. Its subcellular location is the endoplasmic reticulum-Golgi intermediate compartment membrane. It is found in the golgi apparatus membrane. The protein resides in the golgi apparatus. The protein localises to the trans-Golgi network membrane. It localises to the membrane raft. The enzyme catalyses a 1,2-diacyl-sn-glycero-3-phosphate + H2O = a 1,2-diacyl-sn-glycerol + phosphate. It catalyses the reaction 1,2-dihexadecanoyl-sn-glycero-3-phosphate + H2O = 1,2-dihexadecanoyl-sn-glycerol + phosphate. The catalysed reaction is 1,2-di-(9Z-octadecenoyl)-sn-glycero-3-phosphate + H2O = 1,2-di-(9Z-octadecenoyl)-sn-glycerol + phosphate. It carries out the reaction a monoacyl-sn-glycero-3-phosphate + H2O = a monoacylglycerol + phosphate. The enzyme catalyses (9Z)-octadecenoyl-sn-glycero-3-phosphate + H2O = (9Z-octadecenoyl)-glycerol + phosphate. It catalyses the reaction sphing-4-enine 1-phosphate + H2O = sphing-4-enine + phosphate. The catalysed reaction is an N-acylsphing-4-enine 1-phosphate + H2O = an N-acylsphing-4-enine + phosphate. It carries out the reaction N-(octanoyl)-sphing-4-enine-1-phosphate + H2O = N-octanoylsphing-4-enine + phosphate. The enzyme catalyses N-(9Z-octadecenoyl)-ethanolamine phosphate + H2O = N-(9Z-octadecenoyl) ethanolamine + phosphate. Its pathway is lipid metabolism; phospholipid metabolism. Magnesium-independent phospholipid phosphatase. Insensitive to N-ethylmaleimide. Inhibited by sphingosine, zinc ions and modestly by propanolol. In terms of biological role, magnesium-independent phospholipid phosphatase of the plasma membrane that catalyzes the dephosphorylation of a variety of glycerolipid and sphingolipid phosphate esters including phosphatidate/PA, lysophosphatidate/LPA, diacylglycerol pyrophosphate/DGPP, sphingosine 1-phosphate/S1P and ceramide 1-phosphate/C1P. Also acts on N-oleoyl ethanolamine phosphate/N-(9Z-octadecenoyl)-ethanolamine phosphate, a potential physiological compound. Has both an extracellular and an intracellular phosphatase activity, allowing the hydrolysis and the cellular uptake of these bioactive lipid mediators from the milieu, regulating signal transduction in different cellular processes. Through the dephosphorylation of extracellular sphingosine-1-phosphate and the regulation of its extra- and intracellular availability, plays a role in vascular homeostasis, regulating endothelial cell migration, adhesion, survival, proliferation and the production of pro-inflammatory cytokines. By maintaining the appropriate levels of this lipid in the cerebellum, also ensure its proper development and function. Through its intracellular lipid phosphatase activity may act in early compartments of the secretory pathway, regulating the formation of Golgi to endoplasmic reticulum retrograde transport carriers. Independently of this phosphatase activity may also function in the Wnt signaling pathway and the stabilization of beta-catenin/CTNNB1, thereby regulating cell proliferation, migration and differentiation in angiogenesis or yet in tumor growth. Also plays a role in integrin-mediated cell-cell adhesion in angiogenesis. The polypeptide is Phospholipid phosphatase 3 (Homo sapiens (Human)).